The chain runs to 367 residues: MFRALITALFCFSGLALAGAGHAERIKDIGSFAGLRANQLTGYGIVVGLAGTGDDSLDYSTLGMKGVASRFGLQLPAGVNPALKNAAAVMITAELPAFAKPGQRLDITISALGKAKSLRGGTLIMAPLMGADGQIYAMAQGNLAVGGLGIDAADGSKLTINVPTAGRIPGGATVERSVDAGFATTPQLRFDLSEGDLTTSQRVAAAINGRLGQPIARSIDATTITIDAPQGAEVRTALMSRIENLEVDTAEAPARVVVNARTGTVVINGAVRIAPVAVTHGKMTVQVDEKPQIIQPQPFSRGQTAVQQSSAINVEQEARPMFEFNPGASLADIVKAVNAIGASPADLVAILEALKQAGAMKAELVVL.

The signal sequence occupies residues 1-18 (MFRALITALFCFSGLALA).

This sequence belongs to the FlgI family. As to quaternary structure, the basal body constitutes a major portion of the flagellar organelle and consists of four rings (L,P,S, and M) mounted on a central rod.

The protein resides in the periplasm. It is found in the bacterial flagellum basal body. Its function is as follows. Assembles around the rod to form the L-ring and probably protects the motor/basal body from shearing forces during rotation. The sequence is that of Flagellar P-ring protein from Rhizorhabdus wittichii (strain DSM 6014 / CCUG 31198 / JCM 15750 / NBRC 105917 / EY 4224 / RW1) (Sphingomonas wittichii).